The primary structure comprises 233 residues: Lipid A 4'-phosphatase (233 aa).

Met-1 is a topological domain (cytoplasmic). Residues 2–22 (LLFWMWWALLAVFRAFPGIDI) traverse the membrane as a helical segment. Over 23 to 60 (YFSQLFFVGADCDATAAAGNICGGFPYRDVAAFDLLRT) the chain is Extracellular. The chain crosses the membrane as a helical span at residues 61 to 81 (VFFRLPYVVAIVMVWKLVECY). Residues 82–94 (QQHGATFNAERAQ) lie on the Cytoplasmic side of the membrane. A helical membrane pass occupies residues 95–115 (KLKVALGTLLIGPVLLVNVVL). Residues 116–149 (KEHWGRPRPIQTDIFGGALHFAEAGSLAGKCVSN) lie on the Extracellular side of the membrane. Residues 150–170 (CSFVSGEAASAGWLFCLLLFV) traverse the membrane as a helical segment. At 171-176 (PKSLRY) the chain is on the cytoplasmic side. The chain crosses the membrane as a helical span at residues 177-197 (AVAAPLAAISILTPAMRLSFG). Topologically, residues 198 to 200 (AHY) are extracellular. Residues 201 to 221 (LSDVVLGWLSSLVVFAALLAL) traverse the membrane as a helical segment. Residues 222 to 233 (TESQQHQKNSEI) lie on the Cytoplasmic side of the membrane.

It belongs to the lipid A LpxF 4'-phosphatase family.

It is found in the cell inner membrane. It participates in bacterial outer membrane biogenesis; LPS lipid A biosynthesis. Removes the 4'-phosphate moiety from lipid IV(A) (a tetraacylated precursor of lipid A). In Rhizobium leguminosarum, this protein is Lipid A 4'-phosphatase.